We begin with the raw amino-acid sequence, 1001 residues long: MGPPLPLLLLLLLPPPLPRALPAPASARGRQLPGRLGCLFEDGLCGSLETCVNDGVFGRCQKVPVMDTYRYEVPPGALLHLKVTLQKLSRTGFTWQDDYTQRVIAQELANLPKAYLWHGEASGPARSLQQNADNEKWFSLEREVALAKTLRRYLPYLELLSQTPTANAHSRIDHETRPAKGEDSSPENILTYVAHTSALTYPPATRAKYPDNLLRPFSRLQPDELSPKVDGDIDKQKLIAALGAYTAQRLPGENDPEPRYLVHGSARAPRPFSATALSQRWPPPPGDAKDSPSMDDDTLLQSLLKDLQQNSEVDRLGPLKEEKADSVAGAIQSDPAEGSQESHGRGAEGQPREQTDAPETMLQDHRLSEVDDPVYKEVNRLSFQLGDLLKDYGSPLLPEGPLLEKSSREEIKKSEQPEEVLSSEEETAGVEHVRSRTYSKDLFERKPNSEPQPRRLEDQFQNRAPELWEDEESLKLAAQGPPSGGLQLEVQPSEEQQGYILTGNNPLSPEKGKQLMDQVAHILRVPSSFFADIKVLGPAVTFKVSANIQNMTTADVIKAAADNKDQLEKATGLTILQSGIRPKGKLKLLPHQEEQEDSTKFILLTFLSIACILGVLLASSLAYCLRHNSHYKLKDKLSGLGADPSADATEAYQELCRQRMAIRPQDRSEGPHTSRINSVSSQFSDGPMPSPSARSSTSSWSEEPVQSNMDISTGHMILAYMEDHLKNKNRLEKEWEALCAYQAEPNSSLVAQREENAPKNRSLAVLTYDHSRILLKSQNSHGSSDYINASPIMDHDPRNPAYIATQGPLPATVADFWQMVWESGCAVIVMLTPLSENGVRQCHHYWPDEGSNLYHVYEVNLVSEHIWCQDFLVRSFYLKNLQTNETRTVTQFHFLSWYDQGVPSSTRSLLDFRRKVNKCYRGRSCPIIVHCSDGAGRSGTYVLIDMVLNKMAKGAKEIDIAATLEHLRDQRPGMVQTKEQFEFALTAVAEEVNAILKALPQ.

A signal peptide spans 1-27; that stretch reads MGPPLPLLLLLLLPPPLPRALPAPASA. Residues 1-407 form an involved in localization to secretory granules; interaction with CPE region; it reads MGPPLPLLLL…PEGPLLEKSS (407 aa). At 28–600 the chain is on the extracellular side; the sequence is RGRQLPGRLG…HQEEQEDSTK (573 aa). Position 259 is an omega-N-methylarginine (arginine 259). 3 disordered regions span residues 271 to 296, 308 to 359, and 394 to 459; these read PFSA…SMDD, QQNS…DAPE, and SPLL…LEDQ. A compositionally biased stretch (basic and acidic residues) spans 312 to 325; it reads EVDRLGPLKEEKAD. A Phosphoserine modification is found at serine 339. A compositionally biased stretch (basic and acidic residues) spans 340–355; the sequence is QESHGRGAEGQPREQT. Low complexity predominate over residues 394–404; the sequence is SPLLPEGPLLE. Residues 405–416 show a composition bias toward basic and acidic residues; it reads KSSREEIKKSEQ. Over residues 417–428 the composition is skewed to acidic residues; it reads PEEVLSSEEETA. Serine 422 and serine 423 each carry phosphoserine. Over residues 429–459 the composition is skewed to basic and acidic residues; the sequence is GVEHVRSRTYSKDLFERKPNSEPQPRRLEDQ. The N-linked (GlcNAc...) asparagine glycan is linked to asparagine 550. A helical transmembrane segment spans residues 601-621; it reads FILLTFLSIACILGVLLASSL. Residues 622–1001 are Cytoplasmic-facing; the sequence is AYCLRHNSHY…VNAILKALPQ (380 aa). Positions 652–661 match the Tyrosine-based internalization motif motif; the sequence is YQELCRQRMA. The tract at residues 663-705 is disordered; sequence RPQDRSEGPHTSRINSVSSQFSDGPMPSPSARSSTSSWSEEPV. A compositionally biased stretch (polar residues) spans 674–684; the sequence is SRINSVSSQFS. Residues serine 678 and serine 684 each carry the phosphoserine modification. A compositionally biased stretch (low complexity) spans 691 to 705; the sequence is PSARSSTSSWSEEPV. Threonine 697 carries the phosphothreonine modification. The region spanning 731 to 991 is the Tyrosine-protein phosphatase domain; it reads LEKEWEALCA…EFALTAVAEE (261 aa). Residues aspartate 899 and 931-937 contribute to the substrate site; that span reads CSDGAGR. Residue cysteine 931 is the Phosphocysteine intermediate of the active site. Position 956 is an N6-acetyllysine (lysine 956). Glutamine 976 serves as a coordination point for substrate. The Leucine-based sorting signal motif lies at 990-996; it reads EEVNAIL.

This sequence belongs to the protein-tyrosine phosphatase family. Self-associates. Interacts (via cytoplasmic domain) with PTPRN (via cytoplasmic domain). Interacts (precursor form) with CPE. Interacts with HAP1 isoform A. Interacts with AP2A1 or AP2A2 and AP1G1; indicative for an association with adaptor protein complex 2 (AP-2) and adaptor protein complex 1 (AP-1). Interacts with AP2M1; indicative for an association with adaptor protein complex 2 (AP-2). Interacts with MYO5A. In terms of processing, subject to proteolytic cleavage at multiple sites during maturation of secretory granules. In the brain at least IA-2beta71, IA-2beta64 and IA-2beta60 have been detected, in the pancreas and a pancreatic beta cell line only IA-2beta60 has been detected. In terms of tissue distribution, detected in brain. Detected in pancreas islets (at protein level). Detected in pancreas and brain.

It localises to the cytoplasmic vesicle. Its subcellular location is the secretory vesicle membrane. The protein resides in the secretory vesicle. It is found in the synaptic vesicle membrane. The catalysed reaction is O-phospho-L-tyrosyl-[protein] + H2O = L-tyrosyl-[protein] + phosphate. Functionally, plays a role in vesicle-mediated secretory processes. Required for normal accumulation of secretory vesicles in hippocampus, pituitary and pancreatic islets. Required for the accumulation of normal levels of insulin-containing vesicles and preventing their degradation. Plays a role in insulin secretion in response to glucose stimuli. Required for normal accumulation of the neurotransmitters norepinephrine, dopamine and serotonin in the brain. In females, but not in males, required for normal accumulation and secretion of pituitary hormones, such as luteinizing hormone (LH) and follicle-stimulating hormone (FSH). Required to maintain normal levels of renin expression and renin release. May regulate catalytic active protein-tyrosine phosphatases such as PTPRA through dimerization. Has phosphatidylinositol phosphatase activity; the PIPase activity is involved in its ability to regulate insulin secretion. Can dephosphorylate phosphatidylinositol 4,5-biphosphate (PI(4,5)P2), phosphatidylinositol 5-phosphate and phosphatidylinositol 3-phosphate. Regulates PI(4,5)P2 level in the plasma membrane and localization of cofilin at the plasma membrane and thus is indirectly involved in regulation of actin dynamics related to cell migration and metastasis; upon hydrolysis of PI(4,5)P2 cofilin is released from the plasma membrane and acts in the cytoplasm in severing F-actin filaments. The chain is Receptor-type tyrosine-protein phosphatase N2 (Ptprn2) from Mus musculus (Mouse).